The chain runs to 68 residues: Glucagon-1 (68 aa).

This sequence belongs to the glucagon family.

It localises to the secreted. In terms of biological role, promotes hydrolysis of glycogen and lipids, and raises the blood sugar level. This chain is Glucagon-1 (gcg), found in Oncorhynchus kisutch (Coho salmon).